A 346-amino-acid polypeptide reads, in one-letter code: Holliday junction branch migration complex subunit RuvB (346 aa).

Positions 2–183 (TDDRIIGAGA…FGIVQRLEFY (182 aa)) are large ATPase domain (RuvB-L). Residues I22, R23, G64, K67, T68, T69, 130 to 132 (EDF), R173, Y183, and R220 contribute to the ATP site. Residue T68 coordinates Mg(2+). Residues 184–254 (SVEELTRIVR…VAQAAMKMLK (71 aa)) are small ATPAse domain (RuvB-S). Residues 257–346 (PEGFDELDRR…DLFAEVPDVG (90 aa)) are head domain (RuvB-H). DNA contacts are provided by R293, R312, and R317.

Belongs to the RuvB family. Homohexamer. Forms an RuvA(8)-RuvB(12)-Holliday junction (HJ) complex. HJ DNA is sandwiched between 2 RuvA tetramers; dsDNA enters through RuvA and exits via RuvB. An RuvB hexamer assembles on each DNA strand where it exits the tetramer. Each RuvB hexamer is contacted by two RuvA subunits (via domain III) on 2 adjacent RuvB subunits; this complex drives branch migration. In the full resolvosome a probable DNA-RuvA(4)-RuvB(12)-RuvC(2) complex forms which resolves the HJ.

It localises to the cytoplasm. It catalyses the reaction ATP + H2O = ADP + phosphate + H(+). Functionally, the RuvA-RuvB-RuvC complex processes Holliday junction (HJ) DNA during genetic recombination and DNA repair, while the RuvA-RuvB complex plays an important role in the rescue of blocked DNA replication forks via replication fork reversal (RFR). RuvA specifically binds to HJ cruciform DNA, conferring on it an open structure. The RuvB hexamer acts as an ATP-dependent pump, pulling dsDNA into and through the RuvAB complex. RuvB forms 2 homohexamers on either side of HJ DNA bound by 1 or 2 RuvA tetramers; 4 subunits per hexamer contact DNA at a time. Coordinated motions by a converter formed by DNA-disengaged RuvB subunits stimulates ATP hydrolysis and nucleotide exchange. Immobilization of the converter enables RuvB to convert the ATP-contained energy into a lever motion, pulling 2 nucleotides of DNA out of the RuvA tetramer per ATP hydrolyzed, thus driving DNA branch migration. The RuvB motors rotate together with the DNA substrate, which together with the progressing nucleotide cycle form the mechanistic basis for DNA recombination by continuous HJ branch migration. Branch migration allows RuvC to scan DNA until it finds its consensus sequence, where it cleaves and resolves cruciform DNA. The polypeptide is Holliday junction branch migration complex subunit RuvB (Stenotrophomonas maltophilia (strain K279a)).